We begin with the raw amino-acid sequence, 328 residues long: L-lactate dehydrogenase (328 aa).

NAD(+)-binding positions include V18, E39, K46, Y71, and 85 to 86 (GA). Substrate contacts are provided by Q88 and R94. NAD(+) is bound by residues S107, 124–126 (AAN), and S149. 126–129 (NPVD) provides a ligand contact to substrate. A substrate-binding site is contributed by 154-157 (DSAR). Residues R159 and H174 each coordinate beta-D-fructose 1,6-bisphosphate. H181 serves as the catalytic Proton acceptor. The residue at position 226 (Y226) is a Phosphotyrosine. T235 is a binding site for substrate.

Belongs to the LDH/MDH superfamily. LDH family. Homotetramer.

It localises to the cytoplasm. It catalyses the reaction (S)-lactate + NAD(+) = pyruvate + NADH + H(+). It participates in fermentation; pyruvate fermentation to lactate; (S)-lactate from pyruvate: step 1/1. Allosterically activated by fructose 1,6-bisphosphate (FBP). Catalyzes the conversion of lactate to pyruvate. The polypeptide is L-lactate dehydrogenase (Streptococcus thermophilus (strain CNRZ 1066)).